The chain runs to 460 residues: Chromosomal replication initiator protein DnaA (460 aa).

Positions 1–73 (MEISIDSLWS…ANVVQSILGH (73 aa)) are domain I, interacts with DnaA modulators. Residues 73-116 (HPVEIYITVAKGEEFEEIGGGGAWELPTTNSIYETPNQNRQPNT) are domain II. Positions 117–333 (ELNAKYVFSR…GALTRALAYI (217 aa)) are domain III, AAA+ region. The ATP site is built by G161, G163, K164, and T165. The tract at residues 334 to 460 (SIWGLPMTVA…MNSRSRKPSL (127 aa)) is domain IV, binds dsDNA.

The protein belongs to the DnaA family. In terms of assembly, oligomerizes as a right-handed, spiral filament on DNA at oriC.

The protein localises to the cytoplasm. In terms of biological role, plays an essential role in the initiation and regulation of chromosomal replication. ATP-DnaA binds to the origin of replication (oriC) to initiate formation of the DNA replication initiation complex once per cell cycle. Binds the DnaA box (a 9 base pair repeat at the origin) and separates the double-stranded (ds)DNA. Forms a right-handed helical filament on oriC DNA; dsDNA binds to the exterior of the filament while single-stranded (ss)DNA is stabiized in the filament's interior. The ATP-DnaA-oriC complex binds and stabilizes one strand of the AT-rich DNA unwinding element (DUE), permitting loading of DNA polymerase. After initiation quickly degrades to an ADP-DnaA complex that is not apt for DNA replication. Binds acidic phospholipids. The sequence is that of Chromosomal replication initiator protein DnaA from Trichormus variabilis (strain ATCC 29413 / PCC 7937) (Anabaena variabilis).